Reading from the N-terminus, the 322-residue chain is Ubiquinone biosynthesis O-methyltransferase, mitochondrial (322 aa).

Residues 1–37 (MLASVRVNQLQRLLLSARRLSSSPIIPPSRLLHQRLF) constitute a mitochondrion transit peptide. Residues 46–75 (AASFSSSHPKIQTLEGKASNKSRSTSSTTS) form a disordered region. S-adenosyl-L-methionine-binding residues include R108, G139, D160, and L205. Positions 206, 209, and 210 each coordinate Mg(2+).

Belongs to the class I-like SAM-binding methyltransferase superfamily. UbiG/COQ3 family. Component of a multi-subunit COQ enzyme complex. Requires Mg(2+) as cofactor.

The protein localises to the mitochondrion inner membrane. The enzyme catalyses a 3,4-dihydroxy-5-(all-trans-polyprenyl)benzoate + S-adenosyl-L-methionine = a 4-hydroxy-3-methoxy-5-(all-trans-polyprenyl)benzoate + S-adenosyl-L-homocysteine + H(+). It carries out the reaction a 3-demethylubiquinone + S-adenosyl-L-methionine = a ubiquinone + S-adenosyl-L-homocysteine. The catalysed reaction is a 3-demethylubiquinol + S-adenosyl-L-methionine = a ubiquinol + S-adenosyl-L-homocysteine + H(+). It participates in cofactor biosynthesis; ubiquinone biosynthesis. Its function is as follows. O-methyltransferase required for two non-consecutive steps during ubiquinone biosynthesis. Catalyzes the 2 O-methylation of 3,4-dihydroxy-5-(all-trans-polyprenyl)benzoic acid into 4-hydroxy-3-methoxy-5-(all-trans-polyprenyl)benzoic acid. Also catalyzes the last step of ubiquinone biosynthesis by mediating methylation of 3-demethylubiquinone into ubiquinone. Also able to mediate the methylation of 3-demethylubiquinol into ubiquinol. The protein is Ubiquinone biosynthesis O-methyltransferase, mitochondrial of Arabidopsis thaliana (Mouse-ear cress).